The primary structure comprises 103 residues: Co-chaperonin GroES (103 aa).

This sequence belongs to the GroES chaperonin family. Heptamer of 7 subunits arranged in a ring. Interacts with the chaperonin GroEL.

The protein localises to the cytoplasm. Its function is as follows. Together with the chaperonin GroEL, plays an essential role in assisting protein folding. The GroEL-GroES system forms a nano-cage that allows encapsulation of the non-native substrate proteins and provides a physical environment optimized to promote and accelerate protein folding. GroES binds to the apical surface of the GroEL ring, thereby capping the opening of the GroEL channel. The chain is Co-chaperonin GroES from Dinoroseobacter shibae (strain DSM 16493 / NCIMB 14021 / DFL 12).